The chain runs to 1004 residues: NADH:acrylate oxidoreductase (1004 aa).

The residue at position 455 (threonine 455) is an FMN phosphoryl threonine. FAD contacts are provided by alanine 508, glutamate 527, asparagine 535, threonine 536, glycine 540, glycine 541, and aspartate 775. Arginine 834 (proton donor) is an active-site residue. FAD contacts are provided by histidine 941, glutamate 970, alanine 985, and leucine 986.

The protein belongs to the FAD-dependent oxidoreductase 2 family. FRD/SDH subfamily. FAD is required as a cofactor. Requires FMN as cofactor. Is flavinylated on Thr-455 by ApbE, encoded in a neighboring gene. Flavinylation is essential for catalytic activity.

The enzyme catalyses acrylate + NADH + H(+) = propanoate + NAD(+). Functionally, catalyzes the NADH-dependent reduction of acrylate to propanoate. The principal role of ARD in Vibrio seems to be the energy-saving detoxification of acrylate coming from the environment. May also use acrylate as the terminal electron acceptor for NADH regeneration at oxygen deficiency. NADPH cannot replace NADH as the electron donor. Is also able to reduce methacrylate in vitro, but with a much lower efficiency. The chain is NADH:acrylate oxidoreductase from Vibrio harveyi (Beneckea harveyi).